Here is a 622-residue protein sequence, read N- to C-terminus: Dynein axonemal assembly factor 1 (622 aa).

Residues 1–11 show a composition bias toward polar residues; the sequence is MHPEVSEQQAD. The disordered stretch occupies residues 1–80; it reads MHPEVSEQQA…ARNDRDDRGP (80 aa). Basic and acidic residues predominate over residues 32 to 42; the sequence is VRKEEINETKE. Over residues 48–59 the composition is skewed to low complexity; it reads STTSCQSQKQQS. Residues 62 to 80 show a composition bias toward basic and acidic residues; the sequence is SRLECRSGYARNDRDDRGP. LRR repeat units follow at residues 101–123, 124–145, 146–167, 168–189, 190–211, and 215–236; these read ALND…EEYT, GLRC…QAQS, ELRC…EPLQ, KLDA…SCLP, VLNT…QHLG, and RLCV…SVLE. The LRRCT domain maps to 249–288; that stretch reads NPVTKHIPNYRRTVTVRLKQLTYLDDRPVFPKDRACAEAW. Residues 326–336 show a composition bias toward basic and acidic residues; the sequence is EERKKARDKGE. The tract at residues 326–363 is disordered; the sequence is EERKKARDKGETPLPDSEESSSTSPEAQEKPPLGETQE. Residues 337-351 are compositionally biased toward low complexity; it reads TPLPDSEESSSTSPE. Phosphoserine is present on residues S349, S464, and S487. Disordered regions lie at residues 481 to 505 and 535 to 622; these read SSLS…TPTG and TATT…FGLD. Polar residues-rich tracts occupy residues 535–552 and 568–578; these read TATT…TTRP and EPNQSLPAQSS.

It belongs to the DNAAF1 family.

Its subcellular location is the cell projection. The protein resides in the cilium. In terms of biological role, cilium-specific protein required for the stability of the ciliary architecture. Plays a role in cytoplasmic preassembly of dynein arms. Involved in regulation of microtubule-based cilia and actin-based brush border microvilli. In Peromyscus californicus (California mouse), this protein is Dynein axonemal assembly factor 1 (Dnaaf1).